We begin with the raw amino-acid sequence, 164 residues long: MSELTHFDAKGNAWMVDITEKEETHRVAEVRGEVVMAPATLELIQQGGMAKGDVLGVARVAGIMAAKSTPNLIPMAHPIMITGVNIDFQILPPDRVEIRGLVKTGGKTGVEMEALTAVSVAALTIYDMCKAVDKGMMIQNIRLVSKSGGKSGDFMREGESQWEK.

Substrate is bound by residues 75 to 77 (MAH) and 112 to 113 (ME). Residue D127 is part of the active site.

It belongs to the MoaC family. As to quaternary structure, homohexamer; trimer of dimers.

The catalysed reaction is (8S)-3',8-cyclo-7,8-dihydroguanosine 5'-triphosphate = cyclic pyranopterin phosphate + diphosphate. The protein operates within cofactor biosynthesis; molybdopterin biosynthesis. Catalyzes the conversion of (8S)-3',8-cyclo-7,8-dihydroguanosine 5'-triphosphate to cyclic pyranopterin monophosphate (cPMP). This Desulforamulus reducens (strain ATCC BAA-1160 / DSM 100696 / MI-1) (Desulfotomaculum reducens) protein is Cyclic pyranopterin monophosphate synthase.